The primary structure comprises 417 residues: Serine--tRNA ligase (417 aa).

L-serine is bound at residue T226–E228. Residues R257–E259 and V273 contribute to the ATP site. E280 contributes to the L-serine binding site. Position 344 to 347 (E344 to S347) interacts with ATP. L-serine is bound at residue T379.

The protein belongs to the class-II aminoacyl-tRNA synthetase family. Type-1 seryl-tRNA synthetase subfamily. In terms of assembly, homodimer. The tRNA molecule binds across the dimer.

Its subcellular location is the cytoplasm. It catalyses the reaction tRNA(Ser) + L-serine + ATP = L-seryl-tRNA(Ser) + AMP + diphosphate + H(+). It carries out the reaction tRNA(Sec) + L-serine + ATP = L-seryl-tRNA(Sec) + AMP + diphosphate + H(+). It functions in the pathway aminoacyl-tRNA biosynthesis; selenocysteinyl-tRNA(Sec) biosynthesis; L-seryl-tRNA(Sec) from L-serine and tRNA(Sec): step 1/1. Its function is as follows. Catalyzes the attachment of serine to tRNA(Ser). Is also able to aminoacylate tRNA(Sec) with serine, to form the misacylated tRNA L-seryl-tRNA(Sec), which will be further converted into selenocysteinyl-tRNA(Sec). This chain is Serine--tRNA ligase, found in Mycolicibacterium smegmatis (strain ATCC 700084 / mc(2)155) (Mycobacterium smegmatis).